The primary structure comprises 437 residues: Phosphoribosylamine--glycine ligase (437 aa).

One can recognise an ATP-grasp domain in the interval 109-316; it reads KDFLARHGIP…LLDLIEAALN (208 aa). 135-196 lines the ATP pocket; sequence VRQQGAPIVI…EEYLDGEEAS (62 aa). Mg(2+)-binding residues include Glu286 and Asn288.

Belongs to the GARS family. The cofactor is Mg(2+). Mn(2+) is required as a cofactor.

It carries out the reaction 5-phospho-beta-D-ribosylamine + glycine + ATP = N(1)-(5-phospho-beta-D-ribosyl)glycinamide + ADP + phosphate + H(+). Its pathway is purine metabolism; IMP biosynthesis via de novo pathway; N(1)-(5-phospho-D-ribosyl)glycinamide from 5-phospho-alpha-D-ribose 1-diphosphate: step 2/2. In Xylella fastidiosa (strain 9a5c), this protein is Phosphoribosylamine--glycine ligase.